Consider the following 349-residue polypeptide: MQTLSSIINAIVPLDNVAMARTATRLNGLVKPTGSFGRLEHLAIQLAGMRGLSGHHIDRKQIIVMVADHGVYDEGVTISPKSATAIHAQNMMKGITGVCVLAENAGADVKVVDVGIDSDPVPGLVNMKVERGSGNIAQGPAMSRQQAEDLLLASACLTLEQITNGVQLFGVGELGMANTTPAAAVVSVFTDNDPQQIVGIGANFPSERLHHKVAVVRQAIEINRPDARDSIDVLAKVGGYDLVGMAGVMLGAASVGLPVILDGFPSYAAALAACRIAPDVRHYLIPSHLSAEKGSIIALQHLQLAPYLHLDMRLGEGSGAALAMHLVDAACAMYNNMGLLAESNIVLPF.

Glu-316 (proton acceptor) is an active-site residue.

It belongs to the CobT family.

The catalysed reaction is 5,6-dimethylbenzimidazole + nicotinate beta-D-ribonucleotide = alpha-ribazole 5'-phosphate + nicotinate + H(+). The protein operates within nucleoside biosynthesis; alpha-ribazole biosynthesis; alpha-ribazole from 5,6-dimethylbenzimidazole: step 1/2. Catalyzes the synthesis of alpha-ribazole-5'-phosphate from nicotinate mononucleotide (NAMN) and 5,6-dimethylbenzimidazole (DMB). In Photorhabdus laumondii subsp. laumondii (strain DSM 15139 / CIP 105565 / TT01) (Photorhabdus luminescens subsp. laumondii), this protein is Nicotinate-nucleotide--dimethylbenzimidazole phosphoribosyltransferase.